We begin with the raw amino-acid sequence, 224 residues long: Envelope glycoprotein L (224 aa).

Residues 1 to 22 (MGILGWVGLIAVGVLCVRGGLS) form the signal peptide. The interval 20-161 (GLSSTEYVIR…FDYSRTRRCV (142 aa)) is interaction with gH. The interaction with gL stretch occupies residues 20 to 161 (GLSSTEYVIR…FDYSRTRRCV (142 aa)). A gL alphaherpesvirus-type domain is found at 23 to 201 (STEYVIRSRV…LTTPPPIIAT (179 aa)). Intrachain disulfides connect Cys44–Cys76 and Cys149–Cys160. Residues 161-224 (VGRQDLGPTN…RRRRPHSRRL (64 aa)) are disordered. Asn170 carries an N-linked (GlcNAc...) asparagine; by host glycan. Positions 213–224 (KSRRRRPHSRRL) are enriched in basic residues.

This sequence belongs to the herpesviridae glycoprotein L (gL) family. Alphaherpesvirinae gL subfamily. As to quaternary structure, interacts with glycoprotein H (gH); this interaction is necessary for the correct processing and cell surface expression of gH. The heterodimer gH/gL seems to interact with gB trimers during fusion. Post-translationally, N-glycosylated, O-glycosylated, and sialylated.

Its subcellular location is the virion membrane. It localises to the host cell membrane. The protein resides in the host Golgi apparatus. It is found in the host trans-Golgi network. Functionally, the heterodimer glycoprotein H-glycoprotein L is required for the fusion of viral and plasma membranes leading to virus entry into the host cell. Acts as a functional inhibitor of gH and maintains gH in an inhibited form. Upon binding to host integrins, gL dissociates from gH leading to activation of the viral fusion glycoproteins gB and gH. This is Envelope glycoprotein L from Human herpesvirus 1 (strain KOS) (HHV-1).